A 106-amino-acid polypeptide reads, in one-letter code: Replication protein A 14 kDa subunit B (106 aa).

M1 bears the N-acetylmethionine mark.

The protein belongs to the replication factor A protein 3 family. As to quaternary structure, component of the heterotrimeric canonical replication protein A complex (RPA).

The protein resides in the nucleus. As part of the replication protein A (RPA/RP-A), a single-stranded DNA-binding heterotrimeric complex, may play an essential role in DNA replication, recombination and repair. Binds and stabilizes single-stranded DNA intermediates, preventing complementary DNA reannealing and recruiting different proteins involved in DNA metabolism. The sequence is that of Replication protein A 14 kDa subunit B (RPA3B) from Arabidopsis thaliana (Mouse-ear cress).